A 2839-amino-acid chain; its full sequence is PDZ domain-containing protein 2 (2839 aa).

The region spanning 85–182 is the PDZ 1 domain; the sequence is LSFGNIPVFG…LIMLRRFKHK (98 aa). Positions 185–318 are disordered; it reads STYNGNSSNS…RFSKGGKTDF (134 aa). The segment covering 189 to 202 has biased composition (low complexity); it reads GNSSNSSEPGETPT. Residues 280-296 show a composition bias toward basic and acidic residues; that stretch reads HLERSEVDRGTEHRIPK. The region spanning 334 to 419 is the PDZ 2 domain; sequence KMELLKESDG…MVQLVVASKE (86 aa). Positions 437–447 are enriched in polar residues; sequence TSSVEDVSSWT. Positions 437–501 are disordered; the sequence is TSSVEDVSSW…PKQGSNKIKL (65 aa). Residues 448-461 are compositionally biased toward acidic residues; that stretch reads DNEDQEADGEEDEG. A Phosphoserine modification is found at S568. The 87-residue stretch at 586-672 folds into the PDZ 3 domain; the sequence is IIGLYKEKGK…GLFVLTVRTK (87 aa). A compositionally biased stretch (polar residues) spans 678 to 697; the sequence is LTPCSTPTHMSRSASPNFNT. Residues 678-723 form a disordered region; it reads LTPCSTPTHMSRSASPNFNTSGGASAGGSDEGSSSSLGRKTPGPKD. One can recognise a PDZ 4 domain in the interval 728–813; that stretch reads EVTLNKEPRV…GPVRLVIGRH (86 aa). 2 stretches are compositionally biased toward polar residues: residues 832 to 843 and 894 to 908; these read YQESKEANSSPG and GCST…PSTS. Disordered stretches follow at residues 832 to 852 and 879 to 921; these read YQES…KSPS and DFMV…ANSL. A phosphoserine mark is found at S944 and S948. Disordered stretches follow at residues 984 to 1033, 1062 to 1155, 1216 to 1493, 1530 to 1620, 1638 to 1712, 1809 to 1865, 1892 to 1976, 2009 to 2079, 2135 to 2166, 2178 to 2211, 2232 to 2251, 2353 to 2383, 2426 to 2481, and 2516 to 2564; these read SLPG…ISAP, SAEA…PCDL, KAAS…GAPA, FHED…LPTQ, PRES…SPLS, NQGT…DLSK, GKAK…SVSD, PDRG…GNIM, QVAE…SMAK, IRKA…GEDH, HFGR…DSQV, AKSG…GSLG, SRQN…SRSK, and ITPR…GEAA. The segment covering 1012–1022 has biased composition (basic and acidic residues); it reads MDVHNQEERPR. Polar residues-rich tracts occupy residues 1092–1111, 1138–1147, 1221–1236, 1250–1269, 1305–1315, 1384–1401, and 1440–1453; these read RTDT…QQKS, SGSQTVNLTG, LGQQ…SDLI, SKTS…SQPA, TRSASETSTPH, SVSS…PSTD, and RSPS…GSQE. Over residues 1662 to 1672 the composition is skewed to low complexity; that stretch reads SSQPSSLLEMS. Over residues 1698–1711 the composition is skewed to polar residues; it reads EVTSASSAMENSPL. A Phosphoserine modification is found at S1850. Polar residues predominate over residues 1919 to 1931; that stretch reads SPQTSHKTLSKAV. A compositionally biased stretch (basic and acidic residues) spans 1936–1945; that stretch reads HVADHEDPDR. Over residues 2139–2152 the composition is skewed to low complexity; sequence SSTSHPSSLPSHAS. The span at 2370–2383 shows a compositional bias: low complexity; sequence GRRSSGSIVSGSLG. 3 stretches are compositionally biased toward polar residues: residues 2426 to 2437, 2470 to 2480, and 2546 to 2559; these read SRQNPPETSSKG, RHTQPSPVSRS, and PKTS…SASD. Residues 2622-2706 enclose the PDZ 5 domain; that stretch reads FIVLNRKEGS…HKDALVVIKK (85 aa). A disordered region spans residues 2709 to 2729; sequence DQPRPSARQEPPTANGKGLLS. Positions 2750–2835 constitute a PDZ 6 domain; that stretch reads CVEVLKTSAG…GPVQLLIRKH (86 aa).

In terms of assembly, interacts with SCN10A, CTNND2 and PKP4. Post-translationally, a secreted form is produced by caspase-mediated proteolytic cleavage. Isoform 2 is expressed (at protein level) in prostate and many prostate tumors.

The protein localises to the nucleus. It localises to the cytoplasm. Its subcellular location is the endoplasmic reticulum. It is found in the secreted. The polypeptide is PDZ domain-containing protein 2 (PDZD2) (Homo sapiens (Human)).